A 357-amino-acid chain; its full sequence is MTETVVVGISGGVDSAVAACLLMKQGYRVLGLNIRILDTPDEHPSLAPSPLLISDHADYQFPVFSLNLSARFSQEVIRYFQADYLAGKTPNPCMVCNKKIKWHGLLEGARLLGAERIATGHYARTASLDGRVRLYKGLDPQKDQSYFLWMLSQNDLNKTCFPLGELAKEKVRELARTFGVRAAEKKESQEICFVPHDDYCRYLELAVPGLKEKVAGGDIVDENGKVLGKHRGYPFYTIGQRRGLGLSSTEPLYVTALDQENNCVHTGNKSSLDTRSLTVSGLNWINNKSLDEPVEAFGKIRYRDRETPCTIAPLPDGQATITFHTAKHAVAPGQAAVFYHDEEVLGGGFISAVNRDR.

Residues 8-15 and I34 contribute to the ATP site; that span reads GISGGVDS. The Nucleophile role is filled by C96. A disulfide bridge connects residues C96 and C192. ATP is bound at residue G120. The tract at residues 142–144 is interaction with tRNA; the sequence is KDQ. C192 acts as the Cysteine persulfide intermediate in catalysis. The segment at 301–302 is interaction with tRNA; the sequence is RY.

The protein belongs to the MnmA/TRMU family.

The protein resides in the cytoplasm. It catalyses the reaction S-sulfanyl-L-cysteinyl-[protein] + uridine(34) in tRNA + AH2 + ATP = 2-thiouridine(34) in tRNA + L-cysteinyl-[protein] + A + AMP + diphosphate + H(+). Functionally, catalyzes the 2-thiolation of uridine at the wobble position (U34) of tRNA, leading to the formation of s(2)U34. The protein is tRNA-specific 2-thiouridylase MnmA of Chlorobium phaeobacteroides (strain DSM 266 / SMG 266 / 2430).